The sequence spans 426 residues: Glutamate-1-semialdehyde 2,1-aminomutase (426 aa).

Lysine 265 carries the N6-(pyridoxal phosphate)lysine modification.

Belongs to the class-III pyridoxal-phosphate-dependent aminotransferase family. HemL subfamily. In terms of assembly, homodimer. Pyridoxal 5'-phosphate serves as cofactor.

It is found in the cytoplasm. It carries out the reaction (S)-4-amino-5-oxopentanoate = 5-aminolevulinate. The protein operates within porphyrin-containing compound metabolism; protoporphyrin-IX biosynthesis; 5-aminolevulinate from L-glutamyl-tRNA(Glu): step 2/2. This Alcanivorax borkumensis (strain ATCC 700651 / DSM 11573 / NCIMB 13689 / SK2) protein is Glutamate-1-semialdehyde 2,1-aminomutase.